The chain runs to 190 residues: Dynein axonemal light chain 1 (190 aa).

A2 is subject to N-acetylalanine. LRR repeat units lie at residues 47–69, 70–93, 95–114, and 115–138; these read LANCEKLSLSTNCIEKIANLNGL, KNLRILSLGRNNIKNLNGLEAVGD, LEELWISYNFIEKLKGIHVM, and RKLKILYISNNLVKDWAEFVKLAE. S56 bears the Phosphoserine mark.

This sequence belongs to the dynein light chain LC1-type family. Interacts with ZMYND10 (via C-terminus). Interacts with DNAH5, a outer arm dynein heavy chain. Interacts with tubulin located within the A-tubule of the outer doublets in a ATP-independent manner.

It is found in the cytoplasm. The protein localises to the cytoskeleton. Its subcellular location is the cilium axoneme. Its function is as follows. Part of the multisubunit axonemal ATPase complexes that generate the force for cilia motility and govern beat frequency. Component of the outer arm dynein (ODA). May be involved in a mechanosensory feedback mechanism controlling ODA activity based on external conformational cues by tethering the outer arm dynein heavy chain (DNAH5) to the microtubule within the axoneme. Important for ciliary function in the airways and for the function of the cilia that produce the nodal flow essential for the determination of the left-right asymmetry. This Rattus norvegicus (Rat) protein is Dynein axonemal light chain 1.